The following is a 354-amino-acid chain: Glycine betaine/proline betaine transport system permease protein ProW (354 aa).

Residues 1 to 41 (MADQNNPWDTTPAADSAAQSADAWGTPTTAPTDGGGADWLT) form a disordered region. Residues 1–99 (MADQNNPWDT…VDYILNGFQQ (99 aa)) lie on the Cytoplasmic side of the membrane. Residues 13–32 (AADSAAQSADAWGTPTTAPT) are compositionally biased toward low complexity. The chain crosses the membrane as a helical span at residues 100–120 (LLLGMPAPVAIIVFALIAWQI). A topological domain (periplasmic) is located at residue S121. The helical transmembrane segment at 122-142 (GVGMGVATLVSLIAIGAIGAW) threads the bilayer. Residues 143–148 (SQAMVT) are Cytoplasmic-facing. Residues 145–324 (AMVTLALVLT…ILAIILDRLT (180 aa)) enclose the ABC transmembrane type-1 domain. A helical membrane pass occupies residues 149 to 169 (LALVLTALLFCIVIGLPLGIW). Over 170–198 (LARSPRAAKIIRPLLDAMQTTPAFVYLVP) the chain is Periplasmic. The chain crosses the membrane as a helical span at residues 199 to 219 (IVMLFGIGNVPGVVVTIIFAL). Topologically, residues 220–270 (PPIIRLTILGINQVPADLIEASRSFGASPRQMLFKVQLPLAMPTIMAGVNQ) are cytoplasmic. A helical membrane pass occupies residues 271–291 (TLMLALSMVVIASMIAVGGLG). Over 292–300 (QMVLRGIGR) the chain is Periplasmic. Residues 301–321 (LDMGLATVGGVGIVILAIILD) traverse the membrane as a helical segment. Residues 322–354 (RLTQAVGRDSRSRGNRRWYTTGPVGLLTRPFIK) lie on the Cytoplasmic side of the membrane.

The protein belongs to the binding-protein-dependent transport system permease family. CysTW subfamily. The complex is composed of two ATP-binding proteins (ProV), two transmembrane proteins (ProW) and a solute-binding protein (ProX).

The protein resides in the cell inner membrane. Part of the ProU ABC transporter complex involved in glycine betaine and proline betaine uptake. Probably responsible for the translocation of the substrate across the membrane. The protein is Glycine betaine/proline betaine transport system permease protein ProW of Escherichia coli (strain K12).